We begin with the raw amino-acid sequence, 481 residues long: MNILRRGRLGSSVKEDVMKFTTSLEFDKEIFQSDILCDIAHTTMLMEQKIVSIEFGEKVIEELKKIAKVGMDSLNLDPSLDDIHMVIESELIKKLGEDVAGRMHTGRSRNDEVATDLRLSLRKKVLEIVKLLIDMEENMLSLAKEHSETITVGYTHLQQAQPVTFGHQILSHVSAVERDISRFFDAYNRINISPLGCGAMATTGFNIDRKRTMELLGFYELIENSMDGVSSRDFIVETMANISMLGTNLSKICEELILFSTAEFKTVEIADEYTSTSSIMPQKKNPDVAEIARAKLSTLNGNLITVLTIMKALPNTYNRDLQEISPHLWKSTYTIIDCIKMIDGMVSTIKVNKERMKENAEKNYATATELADTLVRECNIAFRMAHGIVGELVRTSIEEKVEIKDIILDVFKANGLHLSKEKIDSALDPYENVKLRDVIGGPAPKEVERAVLSFKNKMELHSKNLNDKMRSIEAVEENLLN.

The protein belongs to the lyase 1 family. Argininosuccinate lyase subfamily.

Its subcellular location is the cytoplasm. The enzyme catalyses 2-(N(omega)-L-arginino)succinate = fumarate + L-arginine. Its pathway is amino-acid biosynthesis; L-arginine biosynthesis; L-arginine from L-ornithine and carbamoyl phosphate: step 3/3. This Methanococcus vannielii (strain ATCC 35089 / DSM 1224 / JCM 13029 / OCM 148 / SB) protein is Argininosuccinate lyase.